A 175-amino-acid chain; its full sequence is Ribosome-binding factor A (175 aa).

The disordered stretch occupies residues 125–175 (TAKHAGEADPYKSDAPEDVDIDEDDFDEEDIDLAGDDDIDEDANKDADSSK). Over residues 128–139 (HAGEADPYKSDA) the composition is skewed to basic and acidic residues. Residues 140–165 (PEDVDIDEDDFDEEDIDLAGDDDIDE) are compositionally biased toward acidic residues. Basic and acidic residues predominate over residues 166–175 (DANKDADSSK).

This sequence belongs to the RbfA family. In terms of assembly, monomer. Binds 30S ribosomal subunits, but not 50S ribosomal subunits or 70S ribosomes.

It localises to the cytoplasm. One of several proteins that assist in the late maturation steps of the functional core of the 30S ribosomal subunit. Associates with free 30S ribosomal subunits (but not with 30S subunits that are part of 70S ribosomes or polysomes). Required for efficient processing of 16S rRNA. May interact with the 5'-terminal helix region of 16S rRNA. This chain is Ribosome-binding factor A, found in Pseudarthrobacter chlorophenolicus (strain ATCC 700700 / DSM 12829 / CIP 107037 / JCM 12360 / KCTC 9906 / NCIMB 13794 / A6) (Arthrobacter chlorophenolicus).